A 507-amino-acid chain; its full sequence is Cobyric acid synthase (507 aa).

Positions 259–456 constitute a GATase cobBQ-type domain; sequence EIQIAVIKLP…LHGIFDNGTW (198 aa). The Nucleophile role is filled by C340. H448 is a catalytic residue.

Belongs to the CobB/CobQ family. CobQ subfamily.

The protein operates within cofactor biosynthesis; adenosylcobalamin biosynthesis. In terms of biological role, catalyzes amidations at positions B, D, E, and G on adenosylcobyrinic A,C-diamide. NH(2) groups are provided by glutamine, and one molecule of ATP is hydrogenolyzed for each amidation. This chain is Cobyric acid synthase, found in Prochlorococcus marinus (strain SARG / CCMP1375 / SS120).